We begin with the raw amino-acid sequence, 66 residues long: Protein I177L (66 aa).

The N-linked (GlcNAc...) asparagine; by host glycan is linked to N11.

It belongs to the asfivirus I177L family.

It localises to the virion. The sequence is that of Protein I177L from African swine fever virus (strain Badajoz 1971 Vero-adapted) (Ba71V).